The sequence spans 79 residues: MPHTLPDISQCIRQNLEQYFKDLNGTEPCGVYDMVLHQVEKPLLVCVMEQCGGNQSKASVMLGLNRNTLRKKLIQHGLL.

Positions 55-74 form a DNA-binding region, H-T-H motif; the sequence is QSKASVMLGLNRNTLRKKLI.

The protein belongs to the transcriptional regulatory Fis family.

The polypeptide is Putative Fis-like DNA-binding protein (Neisseria meningitidis serogroup A / serotype 4A (strain DSM 15465 / Z2491)).